The chain runs to 177 residues: R-phycoerythrin beta chain (177 aa).

(2R,3E)-phycoerythrobilin is bound by residues asparagine 35 and aspartate 39. The phycourobilin site is built by cysteine 50, aspartate 54, and cysteine 61. (2R,3E)-phycoerythrobilin-binding positions include asparagine 72, 77-78 (RR), cysteine 82, and 84-85 (RD). Asparagine 72 carries the post-translational modification N4-methylasparagine. Position 147 to 148 (147 to 148 (SG)) interacts with phycourobilin. Cysteine 158 serves as a coordination point for (2R,3E)-phycoerythrobilin.

This sequence belongs to the phycobiliprotein family. As to quaternary structure, heterododecamer of 6 alpha and 6 beta chains. The basic functional unit of phycobiliproteins is a ring-shaped hexamer formed from two back-to-back trimers contacting via the alpha chain subunits. The trimers are composed of alpha/beta subunit heterodimers arranged around a three-fold axis of symmetry. The phycoerythrins also contain a gamma subunit which is located in the center of the hexamer. In terms of processing, contains two covalently linked phycoerythrobilin chromophores and one covalently linked phycourobilin chromophore.

It localises to the plastid. Its subcellular location is the chloroplast thylakoid membrane. Light-harvesting photosynthetic tetrapyrrole chromophore-protein from the phycobiliprotein complex. The protein is R-phycoerythrin beta chain (cpeB) of Griffithsia monilis (Red alga).